The following is a 220-amino-acid chain: MKLNKYIDHTLLKPEASEEQILKLIEEAKVYDFASICVNPTWIEFAAEQLKGSDVKVCVPIGFPLGANTSDVKAFETKDAIQKGAGEVDMVINVGALKSKNYDLVERDIRAVVEAANGTLVKVILETCLLTDEEKVKACQLAQKAGADFVKTSTGFSTGGATVEDVALMRKTVGPDMGVKASGGARSYEDALAFIEAGATRIGTSAGVAIMKGEEASGDY.

Aspartate 89 (proton donor/acceptor) is an active-site residue. The Schiff-base intermediate with acetaldehyde role is filled by lysine 151. Residue lysine 180 is the Proton donor/acceptor of the active site.

It belongs to the DeoC/FbaB aldolase family. DeoC type 1 subfamily.

Its subcellular location is the cytoplasm. It catalyses the reaction 2-deoxy-D-ribose 5-phosphate = D-glyceraldehyde 3-phosphate + acetaldehyde. It functions in the pathway carbohydrate degradation; 2-deoxy-D-ribose 1-phosphate degradation; D-glyceraldehyde 3-phosphate and acetaldehyde from 2-deoxy-alpha-D-ribose 1-phosphate: step 2/2. In terms of biological role, catalyzes a reversible aldol reaction between acetaldehyde and D-glyceraldehyde 3-phosphate to generate 2-deoxy-D-ribose 5-phosphate. This chain is Deoxyribose-phosphate aldolase, found in Streptococcus sanguinis (strain SK36).